Consider the following 131-residue polypeptide: Small ribosomal subunit protein uS8 (131 aa).

The protein belongs to the universal ribosomal protein uS8 family. In terms of assembly, part of the 30S ribosomal subunit. Contacts proteins S5 and S12.

In terms of biological role, one of the primary rRNA binding proteins, it binds directly to 16S rRNA central domain where it helps coordinate assembly of the platform of the 30S subunit. This is Small ribosomal subunit protein uS8 from Methylococcus capsulatus (strain ATCC 33009 / NCIMB 11132 / Bath).